The chain runs to 297 residues: uncharacterized protein (297 aa).

6 helical membrane-spanning segments follow: residues 26–48 (FVLH…IYAI), 80–102 (NIEL…AALF), 134–156 (LFKF…INLG), 185–205 (LGIF…AIVI), 225–247 (LVDT…VAAY), and 262–284 (LVAV…VELY).

It is found in the cell membrane. This is an uncharacterized protein from Archaeoglobus fulgidus (strain ATCC 49558 / DSM 4304 / JCM 9628 / NBRC 100126 / VC-16).